We begin with the raw amino-acid sequence, 644 residues long: SPbeta prophage-derived uncharacterized protein YomE (644 aa).

The chain is SPbeta prophage-derived uncharacterized protein YomE (yomE) from Bacillus subtilis (strain 168).